The chain runs to 252 residues: 3-deoxy-manno-octulosonate cytidylyltransferase (252 aa).

Belongs to the KdsB family.

Its subcellular location is the cytoplasm. It catalyses the reaction 3-deoxy-alpha-D-manno-oct-2-ulosonate + CTP = CMP-3-deoxy-beta-D-manno-octulosonate + diphosphate. It participates in nucleotide-sugar biosynthesis; CMP-3-deoxy-D-manno-octulosonate biosynthesis; CMP-3-deoxy-D-manno-octulosonate from 3-deoxy-D-manno-octulosonate and CTP: step 1/1. Its pathway is bacterial outer membrane biogenesis; lipopolysaccharide biosynthesis. In terms of biological role, activates KDO (a required 8-carbon sugar) for incorporation into bacterial lipopolysaccharide in Gram-negative bacteria. This Nitratidesulfovibrio vulgaris (strain ATCC 29579 / DSM 644 / CCUG 34227 / NCIMB 8303 / VKM B-1760 / Hildenborough) (Desulfovibrio vulgaris) protein is 3-deoxy-manno-octulosonate cytidylyltransferase.